Consider the following 131-residue polypeptide: Small ribosomal subunit protein uS8 (131 aa).

Belongs to the universal ribosomal protein uS8 family. As to quaternary structure, part of the 30S ribosomal subunit. Contacts proteins S5 and S12.

In terms of biological role, one of the primary rRNA binding proteins, it binds directly to 16S rRNA central domain where it helps coordinate assembly of the platform of the 30S subunit. The chain is Small ribosomal subunit protein uS8 from Nitrosospira multiformis (strain ATCC 25196 / NCIMB 11849 / C 71).